The primary structure comprises 128 residues: Calcitonin gene-related peptide 1 (128 aa).

The signal sequence occupies residues 1–25 (MGFLKFSPFLVVSILLLYQACSLQA). A propeptide spanning residues 26–80 (VPLRSILESSPGMATLSEEEVRLLAALVQDYMQMKARELEQEEEQEAEGSSVTAQ) is cleaved from the precursor. A disulfide bridge connects residues Cys-84 and Cys-89. Phe-119 carries the post-translational modification Phenylalanine amide. The propeptide occupies 125 to 128 (DLQA).

This sequence belongs to the calcitonin family. As to expression, detected in nerve cells of cerebrum, hippocampus and pons/midbrain in newborns, and only in nerve cells of pons/midbrain in adult.

It is found in the secreted. CGRP1/CALCA is a peptide hormone that induces vasodilation mediated by the CALCRL-RAMP1 receptor complex. Dilates a variety of vessels including the coronary, cerebral and systemic vasculature. Its abundance in the CNS also points toward a neurotransmitter or neuromodulator role. It also elevates platelet cAMP. CGRP1 can also bind and activate CALCR-RAMP1 (AMYR1) receptor complex. The sequence is that of Calcitonin gene-related peptide 1 from Mus musculus (Mouse).